The following is an 853-amino-acid chain: Dynamin-A (853 aa).

In terms of domain architecture, Dynamin-type G spans 22 to 296; sequence PLDLPQIVVV…LMFHIRDTLP (275 aa). A G1 motif region spans residues 32–39; the sequence is GSQSSGKS. 32–40 serves as a coordination point for GTP; that stretch reads GSQSSGKSS. Residues 58–60 form a G2 motif region; that stretch reads VTR. The segment at 138–141 is G3 motif; that stretch reads DLPG. The G4 motif stretch occupies residues 207-210; it reads TKLD. Residues 207–213 and 238–241 contribute to the GTP site; these read TKLDLMD and NRSQ. The segment at 237 to 240 is G5 motif; it reads INRS. Low complexity-rich tracts occupy residues 523 to 569 and 590 to 607; these read DQYQ…QQNQ and PAQQ…KGPQ. Positions 523–738 are disordered; sequence DQYQQQQQQQ…RYQDDFYGRG (216 aa). A compositionally biased stretch (polar residues) spans 610–624; the sequence is PPNQSKPSSIPQNGP. Low complexity-rich tracts occupy residues 625 to 635 and 664 to 728; these read NNNNNNNNNNN and NNSN…SSYN. A GED domain is found at 762-853; it reads TELIRELLIS…IINEIRDFRN (92 aa).

The protein belongs to the TRAFAC class dynamin-like GTPase superfamily. Dynamin/Fzo/YdjA family.

The protein localises to the cytoplasm. Functionally, function in membrane trafficking processes along the endo-lysosomal pathway. The sequence is that of Dynamin-A (dymA) from Dictyostelium discoideum (Social amoeba).